A 618-amino-acid polypeptide reads, in one-letter code: Proline--tRNA ligase (618 aa).

The protein belongs to the class-II aminoacyl-tRNA synthetase family. ProS type 1 subfamily. In terms of assembly, homodimer.

Its subcellular location is the cytoplasm. The enzyme catalyses tRNA(Pro) + L-proline + ATP = L-prolyl-tRNA(Pro) + AMP + diphosphate. In terms of biological role, catalyzes the attachment of proline to tRNA(Pro) in a two-step reaction: proline is first activated by ATP to form Pro-AMP and then transferred to the acceptor end of tRNA(Pro). As ProRS can inadvertently accommodate and process non-cognate amino acids such as alanine and cysteine, to avoid such errors it has two additional distinct editing activities against alanine. One activity is designated as 'pretransfer' editing and involves the tRNA(Pro)-independent hydrolysis of activated Ala-AMP. The other activity is designated 'posttransfer' editing and involves deacylation of mischarged Ala-tRNA(Pro). The misacylated Cys-tRNA(Pro) is not edited by ProRS. The sequence is that of Proline--tRNA ligase from Streptococcus pyogenes serotype M5 (strain Manfredo).